Consider the following 841-residue polypeptide: Protein translocase subunit SecA (841 aa).

Residues Gln-85, 103-107 (GEGKT), and Asp-492 each bind ATP. The segment at 788-841 (EVVQGQTTAHQPQEGDEEKTVKKKPVRKVVDIGRNSPCHCGSGKKYKNCHGKTE) is disordered. Residues Cys-825, Cys-827, Cys-836, and His-837 each contribute to the Zn(2+) site. The span at 829–841 (SGKKYKNCHGKTE) shows a compositional bias: basic residues.

The protein belongs to the SecA family. As to quaternary structure, monomer and homodimer. Part of the essential Sec protein translocation apparatus which comprises SecA, SecYEG and auxiliary proteins SecDF. Other proteins may also be involved. Requires Zn(2+) as cofactor.

The protein resides in the cell membrane. Its subcellular location is the cytoplasm. It catalyses the reaction ATP + H2O + cellular proteinSide 1 = ADP + phosphate + cellular proteinSide 2.. In terms of biological role, part of the Sec protein translocase complex. Interacts with the SecYEG preprotein conducting channel. Has a central role in coupling the hydrolysis of ATP to the transfer of proteins into and across the cell membrane, serving as an ATP-driven molecular motor driving the stepwise translocation of polypeptide chains across the membrane. The polypeptide is Protein translocase subunit SecA (Bacillus pumilus (strain SAFR-032)).